The chain runs to 612 residues: UPF0329 protein ECU05_1680/ECU11_0050 (612 aa).

Over residues 304-330 (RQRREMEKKEEEKKKEEEKKKEEEKRK) the composition is skewed to basic and acidic residues. The tract at residues 304 to 424 (RQRREMEKKE…RKRYKIHRRV (121 aa)) is disordered. Positions 331–349 (EEKKKKKEEKKEEKKKKKE) are enriched in basic residues. Over residues 350 to 388 (EKKEEKKEEKKEEKKEEKKEEKKEEKKEEKSGKSLREGE) the composition is skewed to basic and acidic residues.

This sequence belongs to the UPF0329 family.

The protein is UPF0329 protein ECU05_1680/ECU11_0050 of Encephalitozoon cuniculi (strain GB-M1) (Microsporidian parasite).